A 148-amino-acid chain; its full sequence is Lysozyme C (148 aa).

The N-terminal stretch at 1 to 18 (MRALIILGLVLLSVTVQG) is a signal peptide. The C-type lysozyme domain occupies 19–148 (KIFERCELAR…VSQYVKGCGV (130 aa)). 4 disulfides stabilise this stretch: C24-C146, C48-C134, C83-C99, and C95-C113. Active-site residues include E53 and D71.

Belongs to the glycosyl hydrolase 22 family. As to quaternary structure, monomer.

The protein localises to the secreted. It carries out the reaction Hydrolysis of (1-&gt;4)-beta-linkages between N-acetylmuramic acid and N-acetyl-D-glucosamine residues in a peptidoglycan and between N-acetyl-D-glucosamine residues in chitodextrins.. Its function is as follows. Lysozymes have primarily a bacteriolytic function; those in tissues and body fluids are associated with the monocyte-macrophage system and enhance the activity of immunoagents. Also plays a role in digestion in this species. The sequence is that of Lysozyme C (LYZ) from Trachypithecus francoisi (Francois' leaf monkey).